The sequence spans 453 residues: Bifunctional protein GlmU (453 aa).

Positions 1–225 are pyrophosphorylase; that stretch reads MNIVILAAGT…EWETLGVNSK (225 aa). Residues 6–9, lysine 20, glutamine 71, 76–77, 98–100, glycine 135, glutamate 150, asparagine 165, and asparagine 223 contribute to the UDP-N-acetyl-alpha-D-glucosamine site; these read LAAG, GT, and YGD. A Mg(2+)-binding site is contributed by aspartate 100. Asparagine 223 contributes to the Mg(2+) binding site. Residues 226-246 are linker; it reads AQLAELERIHQRNVADALLVD. An N-acetyltransferase region spans residues 247–453; that stretch reads GVTLADPARV…GYVRPVKKKS (207 aa). Residues arginine 329 and lysine 347 each coordinate UDP-N-acetyl-alpha-D-glucosamine. Residue histidine 359 is the Proton acceptor of the active site. Tyrosine 362 and asparagine 373 together coordinate UDP-N-acetyl-alpha-D-glucosamine. Residues alanine 376, 382–383, serine 401, and alanine 419 contribute to the acetyl-CoA site; that span reads NY.

In the N-terminal section; belongs to the N-acetylglucosamine-1-phosphate uridyltransferase family. It in the C-terminal section; belongs to the transferase hexapeptide repeat family. As to quaternary structure, homotrimer. The cofactor is Mg(2+).

The protein resides in the cytoplasm. The enzyme catalyses alpha-D-glucosamine 1-phosphate + acetyl-CoA = N-acetyl-alpha-D-glucosamine 1-phosphate + CoA + H(+). It carries out the reaction N-acetyl-alpha-D-glucosamine 1-phosphate + UTP + H(+) = UDP-N-acetyl-alpha-D-glucosamine + diphosphate. Its pathway is nucleotide-sugar biosynthesis; UDP-N-acetyl-alpha-D-glucosamine biosynthesis; N-acetyl-alpha-D-glucosamine 1-phosphate from alpha-D-glucosamine 6-phosphate (route II): step 2/2. It functions in the pathway nucleotide-sugar biosynthesis; UDP-N-acetyl-alpha-D-glucosamine biosynthesis; UDP-N-acetyl-alpha-D-glucosamine from N-acetyl-alpha-D-glucosamine 1-phosphate: step 1/1. The protein operates within bacterial outer membrane biogenesis; LPS lipid A biosynthesis. Functionally, catalyzes the last two sequential reactions in the de novo biosynthetic pathway for UDP-N-acetylglucosamine (UDP-GlcNAc). The C-terminal domain catalyzes the transfer of acetyl group from acetyl coenzyme A to glucosamine-1-phosphate (GlcN-1-P) to produce N-acetylglucosamine-1-phosphate (GlcNAc-1-P), which is converted into UDP-GlcNAc by the transfer of uridine 5-monophosphate (from uridine 5-triphosphate), a reaction catalyzed by the N-terminal domain. The sequence is that of Bifunctional protein GlmU from Burkholderia orbicola (strain MC0-3).